A 121-amino-acid polypeptide reads, in one-letter code: Large ribosomal subunit protein bL12 (121 aa).

This sequence belongs to the bacterial ribosomal protein bL12 family. Homodimer. Part of the ribosomal stalk of the 50S ribosomal subunit. Forms a multimeric L10(L12)X complex, where L10 forms an elongated spine to which 2 to 4 L12 dimers bind in a sequential fashion. Binds GTP-bound translation factors.

Forms part of the ribosomal stalk which helps the ribosome interact with GTP-bound translation factors. Is thus essential for accurate translation. The protein is Large ribosomal subunit protein bL12 of Lactococcus lactis subsp. cremoris (strain MG1363).